A 43-amino-acid polypeptide reads, in one-letter code: Protein PsbN (43 aa).

Residues 7–27 (VAIFISCLLVSFTGYALYTAF) traverse the membrane as a helical segment.

It belongs to the PsbN family.

Its subcellular location is the plastid. It is found in the chloroplast thylakoid membrane. Its function is as follows. May play a role in photosystem I and II biogenesis. This is Protein PsbN from Zygnema circumcarinatum (Green alga).